The primary structure comprises 197 residues: RIP-like protein (197 aa).

The tract at residues 1–20 is disordered; sequence MNSTQSPVYRTSVEQKRHAQ. An RIP-type zinc finger spans residues 122-191; sequence CPVCQIKNLR…GQLYDMCGSC (70 aa).

This is RIP-like protein (Ripalpha) from Drosophila melanogaster (Fruit fly).